The sequence spans 328 residues: Phosphate acetyltransferase (328 aa).

The protein belongs to the phosphate acetyltransferase and butyryltransferase family.

The protein resides in the cytoplasm. It carries out the reaction acetyl-CoA + phosphate = acetyl phosphate + CoA. It functions in the pathway metabolic intermediate biosynthesis; acetyl-CoA biosynthesis; acetyl-CoA from acetate: step 2/2. The chain is Phosphate acetyltransferase (pta) from Staphylococcus aureus (strain COL).